We begin with the raw amino-acid sequence, 389 residues long: 11-beta-hydroxysteroid dehydrogenase-like 5 (389 aa).

A helical; Signal-anchor for type II membrane protein membrane pass occupies residues Leu11–Ile31. Residues Gly56 to Arg82 and Asp107 each bind NADP(+). Ser186 is a binding site for substrate. Tyr199 functions as the Proton acceptor in the catalytic mechanism. Residues Tyr199–Lys203 and Lys203 each bind NADP(+). Residues Leu337–Phe381 are disordered. A compositionally biased stretch (pro residues) spans Pro365 to Pro378.

Belongs to the short-chain dehydrogenases/reductases (SDR) family.

It localises to the membrane. In Arabidopsis thaliana (Mouse-ear cress), this protein is 11-beta-hydroxysteroid dehydrogenase-like 5 (HSD5).